Reading from the N-terminus, the 419-residue chain is Histone acetyltransferase type B subunit 2 (419 aa).

WD repeat units follow at residues proline 131 to leucine 171, tyrosine 177 to lysine 217, alanine 225 to asparagine 265, asparagine 267 to tyrosine 307, and glycine 311 to threonine 351. Positions aspartate 353–aspartate 357 are interaction with the histone H4 N-terminus. One copy of the WD 6 repeat lies at glycine 368–glycine 408.

This sequence belongs to the WD repeat RBAP46/RBAP48/MSI1 family. In terms of assembly, component of the HAT-B complex composed of at least HAT1 and HAT2. The HAT-B complex binds to histone H4 tail.

It is found in the cytoplasm. The protein resides in the nucleus. Functionally, regulatory subunit of the histone acetylase B (HAT-B) complex. The complex acetylates Lys-12 of histone H4 which is required for telomeric silencing. This chain is Histone acetyltransferase type B subunit 2 (HAT2), found in Candida glabrata (strain ATCC 2001 / BCRC 20586 / JCM 3761 / NBRC 0622 / NRRL Y-65 / CBS 138) (Yeast).